The following is a 756-amino-acid chain: uncharacterized protein (756 aa).

This is an uncharacterized protein from Mycoplasma genitalium (strain ATCC 33530 / DSM 19775 / NCTC 10195 / G37) (Mycoplasmoides genitalium).